An 858-amino-acid chain; its full sequence is DNA mismatch repair protein MutS (858 aa).

613–620 contributes to the ATP binding site; sequence GPNMAGKS.

Belongs to the DNA mismatch repair MutS family.

Functionally, this protein is involved in the repair of mismatches in DNA. It is possible that it carries out the mismatch recognition step. This protein has a weak ATPase activity. This Dehalococcoides mccartyi (strain ATCC BAA-2266 / KCTC 15142 / 195) (Dehalococcoides ethenogenes (strain 195)) protein is DNA mismatch repair protein MutS.